Consider the following 304-residue polypeptide: Protease HtpX homolog (304 aa).

Helical transmembrane passes span 14 to 34 and 39 to 59; these read IFII…IGII and YLNG…IMVM. H144 lines the Zn(2+) pocket. Residue E145 is part of the active site. H148 is a Zn(2+) binding site. Transmembrane regions (helical) follow at residues 159 to 179 and 202 to 222; these read IAIA…RMIF and AIIY…ATAI. E231 is a Zn(2+) binding site.

This sequence belongs to the peptidase M48B family. It depends on Zn(2+) as a cofactor.

It is found in the cell membrane. This Listeria monocytogenes serotype 4b (strain CLIP80459) protein is Protease HtpX homolog.